A 425-amino-acid chain; its full sequence is CinA-like protein (425 aa).

This sequence belongs to the CinA family.

The chain is CinA-like protein from Shewanella sp. (strain ANA-3).